The sequence spans 551 residues: Trigger factor (551 aa).

The PPIase FKBP-type domain maps to 165–250 (GDLVVLDFAG…ATDVRVPGET (86 aa)). The segment at 442–551 (ADDDTIGKGH…APAKKKAAAE (110 aa)) is disordered. A compositionally biased stretch (basic and acidic residues) spans 458 to 472 (GHDHHDHDHDHDHAA). Residues 513-541 (EAAPAPKKAPAKKAAAAKAEEAPAAAPKK) are compositionally biased toward low complexity. Residues 542–551 (APAKKKAAAE) are compositionally biased toward basic residues.

This sequence belongs to the FKBP-type PPIase family. Tig subfamily.

The protein resides in the cytoplasm. It catalyses the reaction [protein]-peptidylproline (omega=180) = [protein]-peptidylproline (omega=0). Involved in protein export. Acts as a chaperone by maintaining the newly synthesized protein in an open conformation. Functions as a peptidyl-prolyl cis-trans isomerase. In Rhizorhabdus wittichii (strain DSM 6014 / CCUG 31198 / JCM 15750 / NBRC 105917 / EY 4224 / RW1) (Sphingomonas wittichii), this protein is Trigger factor.